The chain runs to 512 residues: Ribose import ATP-binding protein RbsA (512 aa).

ABC transporter domains lie at L6–E242 and V252–Q496. G38–S45 provides a ligand contact to ATP.

The protein belongs to the ABC transporter superfamily. Ribose importer (TC 3.A.1.2.1) family. In terms of assembly, the complex is composed of an ATP-binding protein (RbsA), two transmembrane proteins (RbsC) and a solute-binding protein (RbsB).

It localises to the cell inner membrane. The catalysed reaction is D-ribose(out) + ATP + H2O = D-ribose(in) + ADP + phosphate + H(+). Functionally, part of the ABC transporter complex RbsABC involved in ribose import. Responsible for energy coupling to the transport system. The polypeptide is Ribose import ATP-binding protein RbsA (Pseudomonas putida (strain ATCC 47054 / DSM 6125 / CFBP 8728 / NCIMB 11950 / KT2440)).